The following is a 627-amino-acid chain: Mitochondrial Rho GTPase 1 (627 aa).

The Miro 1 domain occupies 1–169 (MATVRICVCG…FFLCQKAVTH (169 aa)). The Cytoplasmic segment spans residues 1-599 (MATVRICVCG…PRSNEEGPDR (599 aa)). Residues 10–17 (GDESTGKS), 58–62 (DTSAR), and 114–117 (NKSD) contribute to the GTP site. EF-hand domains are found at residues 185-220 (LCIN…CFDK) and 305-340 (AGYR…APGL). Ca(2+) is bound by residues aspartate 198, aspartate 200, aspartate 202, tyrosine 204, glutamate 209, aspartate 318, aspartate 320, aspartate 322, and glutamate 329. The Miro 2 domain occupies 420-584 (RNVVLCYVLG…FVAYADAATT (165 aa)). GTP is bound by residues 429–436 (GASGAGKS), 465–469 (ELPGG), and 534–537 (LKAD). Residues 600–620 (TSLYIALGATACAGVAALTIW) traverse the membrane as a helical; Anchor for type IV membrane protein segment. Residues 621-627 (RRATNAL) lie on the Mitochondrial intermembrane side of the membrane.

This sequence belongs to the mitochondrial Rho GTPase family.

The protein resides in the mitochondrion outer membrane. Functionally, mitochondrial GTPase involved in mitochondrial trafficking. Probably involved in control of anterograde transport of mitochondria and their subcellular distribution. The protein is Mitochondrial Rho GTPase 1 (GEM1) of Gibberella zeae (strain ATCC MYA-4620 / CBS 123657 / FGSC 9075 / NRRL 31084 / PH-1) (Wheat head blight fungus).